The sequence spans 1742 residues: Unconventional myosin-Vc (1742 aa).

Ala2 bears the N-acetylalanine mark. One can recognise a Myosin N-terminal SH3-like domain in the interval 8 to 62 (TQYNRVWIPDPEEVWKSAEIAKDYRVGDKVLRLLLEDGTELDYSVNPESLPPLRN). The region spanning 67 to 753 (VGENDLTALS…QVAYLEKLRL (687 aa)) is the Myosin motor domain. Residue 161-168 (GESGAGKT) participates in ATP binding. The actin-binding stretch occupies residues 632 to 654 (LYLLMETLNATTPHYVRCIKPND). 5 consecutive IQ domains span residues 756-779 (LRQSCVMVQKHMRGWLQRKKFLRE), 780-806 (RRAALIIQQYFRGQQTVRKAITAVALK), 807-829 (EAWAAIIIQKHCRGYLVRSLYQL), 830-854 (IRMATITMQAYSRGFLARRRYRKML), and 855-884 (EEHKAVILQKYARAWLARRRFQSIRRFVLN). Positions 884–1351 (NIQLTYRVQR…SKTIGKANDV (468 aa)) form a coiled coil. Residues 1421–1697 (NSTINGIKQV…VRKVQALLNS (277 aa)) form the Dilute domain.

The protein belongs to the TRAFAC class myosin-kinesin ATPase superfamily. Myosin family. In terms of tissue distribution, expressed chiefly in non-neuronal tissues. Particularly abundant in epithelial and glandular tissues including pancreas, prostate, mammary, stomach, colon and lung.

Its function is as follows. May be involved in transferrin trafficking. Likely to power actin-based membrane trafficking in many physiologically crucial tissues. The protein is Unconventional myosin-Vc (MYO5C) of Homo sapiens (Human).